Here is a 135-residue protein sequence, read N- to C-terminus: ATP synthase epsilon chain (135 aa).

The tract at residues 101 to 122 (TAVTKLEGQPSTPEKVKAQQLF) is disordered.

Belongs to the ATPase epsilon chain family. In terms of assembly, F-type ATPases have 2 components, CF(1) - the catalytic core - and CF(0) - the membrane proton channel. CF(1) has five subunits: alpha(3), beta(3), gamma(1), delta(1), epsilon(1). CF(0) has three main subunits: a, b and c.

It is found in the cellular thylakoid membrane. Its function is as follows. Produces ATP from ADP in the presence of a proton gradient across the membrane. This chain is ATP synthase epsilon chain, found in Synechococcus sp. (strain CC9311).